The following is a 340-amino-acid chain: Fructoselysine 6-phosphate deglycase (340 aa).

SIS domains lie at 35–169 (IVEE…RLAP) and 201–331 (LGEL…PDER).

In terms of assembly, homododecamer.

It carries out the reaction N(6)-(6-phospho-D-fructosyl)-L-lysine + H2O = D-glucose 6-phosphate + L-lysine. It participates in carbohydrate metabolism; fructoselysine degradation; D-glucose 6-phosphate and lysine from fructoselysine: step 2/2. Its activity is regulated as follows. Strongly inhibited by ZnCl(2). In terms of biological role, catalyzes the reversible conversion of fructoselysine 6-phosphate to glucose 6-phosphate and lysine. Functions in a fructoselysine degradation pathway that allows E.coli to grow on fructoselysine or psicoselysine. This is Fructoselysine 6-phosphate deglycase from Escherichia coli (strain K12).